Consider the following 240-residue polypeptide: Glutathione S-transferase theta-1 (240 aa).

Residues 2–82 enclose the GST N-terminal domain; the sequence is GLELYLDLLS…YLTRKYKVPD (81 aa). Glutathione contacts are provided by residues His40, 53-54, and 66-67; these read KV and ES. Positions 88 to 220 constitute a GST C-terminal domain; that stretch reads DLQARARVDE…HEVILKAKDF (133 aa).

Belongs to the GST superfamily. Theta family. As to quaternary structure, homodimer. In terms of tissue distribution, found in erythrocyte. Expressed at low levels in liver. In lung, expressed at low levels in club cells and ciliated cells at the alveolar/bronchiolar junction. Absent from epithelial cells of larger bronchioles.

The protein resides in the cytoplasm. It catalyses the reaction RX + glutathione = an S-substituted glutathione + a halide anion + H(+). Conjugation of reduced glutathione to a wide number of exogenous and endogenous hydrophobic electrophiles. Acts on 1,2-epoxy-3-(4-nitrophenoxy)propane, phenethylisothiocyanate 4-nitrobenzyl chloride and 4-nitrophenethyl bromide. Displays glutathione peroxidase activity with cumene hydroperoxide. The protein is Glutathione S-transferase theta-1 (GSTT1) of Homo sapiens (Human).